A 164-amino-acid chain; its full sequence is Crossover junction endodeoxyribonuclease RuvC (164 aa).

Catalysis depends on residues Asp-7, Glu-67, and Asp-139. Asp-7, Glu-67, and Asp-139 together coordinate Mg(2+).

Belongs to the RuvC family. Homodimer which binds Holliday junction (HJ) DNA. The HJ becomes 2-fold symmetrical on binding to RuvC with unstacked arms; it has a different conformation from HJ DNA in complex with RuvA. In the full resolvosome a probable DNA-RuvA(4)-RuvB(12)-RuvC(2) complex forms which resolves the HJ. Mg(2+) is required as a cofactor.

Its subcellular location is the cytoplasm. The catalysed reaction is Endonucleolytic cleavage at a junction such as a reciprocal single-stranded crossover between two homologous DNA duplexes (Holliday junction).. Its function is as follows. The RuvA-RuvB-RuvC complex processes Holliday junction (HJ) DNA during genetic recombination and DNA repair. Endonuclease that resolves HJ intermediates. Cleaves cruciform DNA by making single-stranded nicks across the HJ at symmetrical positions within the homologous arms, yielding a 5'-phosphate and a 3'-hydroxyl group; requires a central core of homology in the junction. The consensus cleavage sequence is 5'-(A/T)TT(C/G)-3'. Cleavage occurs on the 3'-side of the TT dinucleotide at the point of strand exchange. HJ branch migration catalyzed by RuvA-RuvB allows RuvC to scan DNA until it finds its consensus sequence, where it cleaves and resolves the cruciform DNA. The sequence is that of Crossover junction endodeoxyribonuclease RuvC from Geobacter metallireducens (strain ATCC 53774 / DSM 7210 / GS-15).